The following is a 159-amino-acid chain: Phosphopantetheine adenylyltransferase (159 aa).

Ser10 is a substrate binding site. Residues 10-11 (SF) and His18 contribute to the ATP site. Substrate is bound by residues Lys42, Leu77, and Lys91. Residues 92–94 (GIR), Glu102, and 126–132 (NAHVSSS) contribute to the ATP site.

It belongs to the bacterial CoaD family. Homohexamer. It depends on Mg(2+) as a cofactor.

Its subcellular location is the cytoplasm. The catalysed reaction is (R)-4'-phosphopantetheine + ATP + H(+) = 3'-dephospho-CoA + diphosphate. The protein operates within cofactor biosynthesis; coenzyme A biosynthesis; CoA from (R)-pantothenate: step 4/5. Reversibly transfers an adenylyl group from ATP to 4'-phosphopantetheine, yielding dephospho-CoA (dPCoA) and pyrophosphate. In Leifsonia xyli subsp. xyli (strain CTCB07), this protein is Phosphopantetheine adenylyltransferase.